The primary structure comprises 820 residues: Probable beta-glucosidase ARB_05654 (820 aa).

Residues 1–18 (MLFRWCPLVALAIASGTA) form the signal peptide. Residues N62 and N276 are each glycosylated (N-linked (GlcNAc...) asparagine). The active site involves D304. Residues N339, N346, N465, N547, N566, N588, and N811 are each glycosylated (N-linked (GlcNAc...) asparagine).

The protein belongs to the glycosyl hydrolase 3 family.

Its subcellular location is the secreted. It carries out the reaction Hydrolysis of terminal, non-reducing beta-D-glucosyl residues with release of beta-D-glucose.. It functions in the pathway glycan metabolism; cellulose degradation. Functionally, beta-glucosidases are one of a number of cellulolytic enzymes involved in the degradation of cellulosic biomass. Catalyzes the last step releasing glucose from the inhibitory cellobiose. The sequence is that of Probable beta-glucosidase ARB_05654 from Arthroderma benhamiae (strain ATCC MYA-4681 / CBS 112371) (Trichophyton mentagrophytes).